The sequence spans 78 residues: Mandibular organ-inhibiting hormone 1 (78 aa).

3 cysteine pairs are disulfide-bonded: C7–C44, C24–C40, and C27–C53.

Belongs to the arthropod CHH/MIH/GIH/VIH hormone family. In terms of tissue distribution, produced by the medulla terminalis X-organ in the eyestalks and transported to the sinus gland where it is stored and released.

The protein localises to the secreted. In terms of biological role, represses the synthesis of methyl farnesoate, the precursor of insect juvenile hormone III in the mandibular organ. The chain is Mandibular organ-inhibiting hormone 1 from Cancer pagurus (Rock crab).